We begin with the raw amino-acid sequence, 227 residues long: Isoprenyl transferase (227 aa).

Residue Asp13 is part of the active site. Asp13 serves as a coordination point for Mg(2+). Residues 14–17 (GNGR), Trp18, Arg26, His30, and 58–60 (STE) each bind substrate. Residue Asn61 is the Proton acceptor of the active site. Residues Trp62, Arg64, Arg175, and 181–183 (RLS) contribute to the substrate site. Glu194 lines the Mg(2+) pocket.

Belongs to the UPP synthase family. Homodimer. Requires Mg(2+) as cofactor.

Functionally, catalyzes the condensation of isopentenyl diphosphate (IPP) with allylic pyrophosphates generating different type of terpenoids. This Treponema denticola (strain ATCC 35405 / DSM 14222 / CIP 103919 / JCM 8153 / KCTC 15104) protein is Isoprenyl transferase.